A 240-amino-acid chain; its full sequence is Homeobox protein DLX-4 (240 aa).

Disordered stretches follow at residues 44–70 and 175–194; these read DLSY…DSYL and LKQS…PSLS. The segment at residues 116 to 175 is a DNA-binding region (homeobox); sequence LRKPRTIYSSLQLQHLNQRFQHTQYLALPERAQLAAQLGLTQTQVKIWFQNKRSKYKKLL.

Belongs to the distal-less homeobox family. Branchial arches, molar and incisor teeth and limbs.

Its subcellular location is the nucleus. In terms of biological role, may play a role in determining the production of hemoglobin S. May act as a repressor. During embryonic development, plays a role in palatogenesis. In Mus musculus (Mouse), this protein is Homeobox protein DLX-4 (Dlx4).